The following is a 397-amino-acid chain: Guanine nucleotide-binding protein G(s) subunit alpha (397 aa).

Residues 1-23 (MGCLGNSKTEDQRNEEKAQREAN) form a disordered region. Residue glycine 2 is the site of N-palmitoyl glycine attachment. Residue cysteine 3 is the site of S-palmitoyl cysteine attachment. The segment covering 8–23 (KTEDQRNEEKAQREAN) has biased composition (basic and acidic residues). The region spanning 39–397 (ATHRLLLLGA…RMHLRQYELL (359 aa)) is the G-alpha domain. The G1 motif stretch occupies residues 42 to 55 (RLLLLGAGESGKST). GTP is bound by residues 47-55 (GAGESGKST), 182-189 (LLRCRVLT), 208-212 (DVGGQ), 277-280 (NKQD), and alanine 369. Positions 54 and 189 each coordinate Mg(2+). Residues 181 to 189 (DLLRCRVLT) form a G2 motif region. Residues 204-213 (FHMFDVGGQR) are G3 motif. A G4 motif region spans residues 273–280 (ILFLNKQD). A G5 motif region spans residues 367–372 (TCAVDT).

The protein belongs to the G-alpha family. G(s) subfamily. In terms of assembly, heterotrimeric G proteins are composed of 3 units; alpha, beta and gamma. The alpha chain contains the guanine nucleotide binding site. Interacts with CRY1; the interaction may block GPCR-mediated regulation of cAMP concentrations. Interacts with ADCY6 and stimulates its adenylyl cyclase activity. Interacts with ADCY2 and ADCY5. Stimulates the ADCY5 adenylyl cyclase activity. Interaction with SASH1.

It is found in the cell membrane. In terms of biological role, guanine nucleotide-binding proteins (G proteins) function as transducers in numerous signaling pathways controlled by G protein-coupled receptors (GPCRs). Signaling involves the activation of adenylyl cyclases, resulting in increased levels of the signaling molecule cAMP. GNAS functions downstream of several GPCRs, including beta-adrenergic receptors. Stimulates the Ras signaling pathway via RAPGEF2. The polypeptide is Guanine nucleotide-binding protein G(s) subunit alpha (GNAS) (Sus scrofa (Pig)).